Consider the following 337-residue polypeptide: Tetraacyldisaccharide 4'-kinase (337 aa).

55-62 (NAGGTGKT) contributes to the ATP binding site.

Belongs to the LpxK family.

It catalyses the reaction a lipid A disaccharide + ATP = a lipid IVA + ADP + H(+). It functions in the pathway glycolipid biosynthesis; lipid IV(A) biosynthesis; lipid IV(A) from (3R)-3-hydroxytetradecanoyl-[acyl-carrier-protein] and UDP-N-acetyl-alpha-D-glucosamine: step 6/6. In terms of biological role, transfers the gamma-phosphate of ATP to the 4'-position of a tetraacyldisaccharide 1-phosphate intermediate (termed DS-1-P) to form tetraacyldisaccharide 1,4'-bis-phosphate (lipid IVA). The chain is Tetraacyldisaccharide 4'-kinase from Dinoroseobacter shibae (strain DSM 16493 / NCIMB 14021 / DFL 12).